A 459-amino-acid chain; its full sequence is Cysteine--tRNA ligase (459 aa).

Zn(2+) is bound at residue cysteine 29. The short motif at 31 to 41 is the 'HIGH' region element; it reads VTTYDYCHIGH. Zn(2+)-binding residues include cysteine 210, histidine 235, and glutamate 239. A 'KMSKS' region motif is present at residues 267-271; that stretch reads KMSKS. Residue lysine 270 participates in ATP binding.

Belongs to the class-I aminoacyl-tRNA synthetase family. As to quaternary structure, monomer. The cofactor is Zn(2+).

The protein localises to the cytoplasm. It carries out the reaction tRNA(Cys) + L-cysteine + ATP = L-cysteinyl-tRNA(Cys) + AMP + diphosphate. The chain is Cysteine--tRNA ligase from Idiomarina loihiensis (strain ATCC BAA-735 / DSM 15497 / L2-TR).